An 80-amino-acid polypeptide reads, in one-letter code: Small ribosomal subunit protein bS16 (80 aa).

This sequence belongs to the bacterial ribosomal protein bS16 family.

The polypeptide is Small ribosomal subunit protein bS16 (Hydrogenovibrio crunogenus (strain DSM 25203 / XCL-2) (Thiomicrospira crunogena)).